A 447-amino-acid polypeptide reads, in one-letter code: Probable alpha-galactosidase B (447 aa).

The first 25 residues, 1-25, serve as a signal peptide directing secretion; it reads MTTFFSLTTAAAVLTLARGSNALVR. Disulfide bonds link Cys-45/Cys-77 and Cys-127/Cys-157. Asp-155 acts as the Nucleophile in catalysis. N-linked (GlcNAc...) asparagine glycans are attached at residues Asn-162 and Asn-180. 225-229 lines the substrate pocket; that stretch reads EWGQA. A glycan (N-linked (GlcNAc...) asparagine) is linked at Asn-236. Residue Asp-247 is the Proton donor of the active site. Asn-286 is a glycosylation site (N-linked (GlcNAc...) asparagine).

It belongs to the glycosyl hydrolase 27 family.

The protein resides in the secreted. The enzyme catalyses Hydrolysis of terminal, non-reducing alpha-D-galactose residues in alpha-D-galactosides, including galactose oligosaccharides, galactomannans and galactolipids.. Hydrolyzes a variety of simple alpha-D-galactoside as well as more complex molecules such as oligosaccharides and polysaccharides. In Aspergillus fumigatus (strain ATCC MYA-4609 / CBS 101355 / FGSC A1100 / Af293) (Neosartorya fumigata), this protein is Probable alpha-galactosidase B (aglB).